The chain runs to 312 residues: Ribosomal protein L11 methyltransferase (312 aa).

S-adenosyl-L-methionine contacts are provided by Thr-162, Gly-183, Asp-205, and Asn-248.

The protein belongs to the methyltransferase superfamily. PrmA family.

The protein resides in the cytoplasm. The catalysed reaction is L-lysyl-[protein] + 3 S-adenosyl-L-methionine = N(6),N(6),N(6)-trimethyl-L-lysyl-[protein] + 3 S-adenosyl-L-homocysteine + 3 H(+). In terms of biological role, methylates ribosomal protein L11. The polypeptide is Ribosomal protein L11 methyltransferase (Bacillus cytotoxicus (strain DSM 22905 / CIP 110041 / 391-98 / NVH 391-98)).